The primary structure comprises 466 residues: Alpha-1A adrenergic receptor (466 aa).

Over 1-25 the chain is Extracellular; that stretch reads MVFLSGNASDSSNCTQPPAPVNIPK. 2 N-linked (GlcNAc...) asparagine glycosylation sites follow: N7 and N13. The helical transmembrane segment at 26–51 threads the bilayer; it reads AILLGVILGVLILFGVPGNILVILSV. At 52 to 63 the chain is on the cytoplasmic side; it reads ACHRHLHSVTHY. The helical transmembrane segment at 64-89 threads the bilayer; sequence YIVNLAVADLLLTSTVLPFSAIFEIL. At 90–99 the chain is on the extracellular side; that stretch reads GYWAFGRVFC. The chain crosses the membrane as a helical span at residues 100-122; sequence NIWAAVDVLCCTASIMSLCIISI. Over 123–143 the chain is Cytoplasmic; the sequence is DRYIGVSYPLRYPTIVTQRRG. The chain crosses the membrane as a helical span at residues 144 to 168; it reads LRALLCLWALSLVISIGPLFGWRQP. The Extracellular segment spans residues 169-181; that stretch reads APQDETICQINED. A helical membrane pass occupies residues 182–205; that stretch reads PSYVLFSALGSFYVPLAIILVMYC. At 206 to 272 the chain is on the cytoplasmic side; it reads RVYVVAKRES…KFSREKKAAK (67 aa). The chain crosses the membrane as a helical span at residues 273-297; that stretch reads TLGIVVGCFVLCWLPFFLVMPIGSF. Residues 298–304 lie on the Extracellular side of the membrane; the sequence is FPDFKPS. The helical transmembrane segment at 305–329 threads the bilayer; it reads ETVFKIVFWLGYLNSCINPIIYPCS. At 330–466 the chain is on the cytoplasmic side; it reads SQEFKKAFQN…ISLSENGEEV (137 aa). Residues 334-349 carry the Nuclear localization signal motif; sequence KKAFQNVLKIQCLRRK. The S-palmitoyl cysteine moiety is linked to residue C345.

This sequence belongs to the G-protein coupled receptor 1 family. Adrenergic receptor subfamily. ADRA1A sub-subfamily. Homo- and heterooligomer. Heterooligomerizes with ADRA1B homooligomers in cardiac myocytes. Interacts with CAVIN4.

It localises to the nucleus membrane. The protein resides in the cell membrane. The protein localises to the cytoplasm. Its subcellular location is the membrane. It is found in the caveola. In terms of biological role, this alpha-adrenergic receptor mediates its action by association with G proteins that activate a phosphatidylinositol-calcium second messenger system. Its effect is mediated by G(q) and G(11) proteins. Nuclear ADRA1A-ADRA1B heterooligomers regulate phenylephrine (PE)-stimulated ERK signaling in cardiac myocytes. The chain is Alpha-1A adrenergic receptor (ADRA1A) from Cavia porcellus (Guinea pig).